A 621-amino-acid polypeptide reads, in one-letter code: Protein Rep78 (621 aa).

A PV NS1-Nuc domain is found at 1–199 (MPGFYEIVIK…AQHLTHVSQT (199 aa)). Residues glutamate 83, histidine 90, and histidine 92 each coordinate a divalent metal cation. Positions 90–92 (HMH) match the RCR-2 motif. The active-site For nuclease activity is tyrosine 156. Positions 156-160 (YLLPK) match the RCR-3 motif. Over residues 196-211 (VSQTQEQNKENQNPNS) the composition is skewed to polar residues. Residues 196–216 (VSQTQEQNKENQNPNSDAPVI) are disordered. The SF3 helicase domain maps to 308–463 (DPQYAASVFL…LDHDFGKVTK (156 aa)). 334–341 (GPATTGKT) is a binding site for ATP. The interval 489–520 (GGAKKRPAPSDADISEPKRVRESVAQPSTSDA) is disordered.

As to quaternary structure, hexamer when associated with the viral DNA ori sequence. Interacts with host PRKX. Interacts with host TOPORS. Interacts with host TBP and SUB1/PC4; these interactions play important roles in transcriptional regulation. A divalent metal cation is required as a cofactor.

The protein resides in the host nucleus. Its function is as follows. Plays an essential role in the initiation of viral DNA synthesis. Binds specifically to an inverted terminal repeat element (ITR) on the 3' and 5' ends of the viral DNA, where it cleaves a site specifically to generate a priming site for initiation of the synthesis of a complementary strand. Also plays a role as transcriptional regulator, DNA helicase and as key factors in site-specific integration of the viral genome. Regulates host PKA activity by interacting with host PRKX as a mechanism of interfering with helper virus propagation and promoting its own replication. Inhibits the host cell cycle G1/S, S and G2/M transitions. These arrests may provide essential cellular factors for viral DNA replication. This is Protein Rep78 (Rep78) from Adeno-associated virus 2 (isolate Srivastava/1982) (AAV-2).